The sequence spans 190 residues: NADH-quinone oxidoreductase subunit C (190 aa).

It belongs to the complex I 30 kDa subunit family. In terms of assembly, NDH-1 is composed of 14 different subunits. Subunits NuoB, C, D, E, F, and G constitute the peripheral sector of the complex.

The protein resides in the cell membrane. It catalyses the reaction a quinone + NADH + 5 H(+)(in) = a quinol + NAD(+) + 4 H(+)(out). NDH-1 shuttles electrons from NADH, via FMN and iron-sulfur (Fe-S) centers, to quinones in the respiratory chain. The immediate electron acceptor for the enzyme in this species is believed to be ubiquinone. Couples the redox reaction to proton translocation (for every two electrons transferred, four hydrogen ions are translocated across the cytoplasmic membrane), and thus conserves the redox energy in a proton gradient. The sequence is that of NADH-quinone oxidoreductase subunit C from Wolbachia sp. subsp. Brugia malayi (strain TRS).